Consider the following 366-residue polypeptide: Agamous-like MADS-box protein AGL36 (366 aa).

Positions 1–59 (MKKVKLSLIANERSRKTSFIKRKDGIFKKLHELSTLCGVQACALIYSPFIPVPESWPSR) constitute an MADS-box domain. Residues 86–115 (TYLMERITKAKEQLKNLAAENRELQVRRFM) are a coiled coil.

Interacts with AGL62.

The protein localises to the nucleus. Functionally, probable transcription factor. This Arabidopsis thaliana (Mouse-ear cress) protein is Agamous-like MADS-box protein AGL36 (AGL36).